The following is a 207-amino-acid chain: Small ribosomal subunit protein uS4 (207 aa).

The 61-residue stretch at Arg-96–Ala-156 folds into the S4 RNA-binding domain.

The protein belongs to the universal ribosomal protein uS4 family. As to quaternary structure, part of the 30S ribosomal subunit. Contacts protein S5. The interaction surface between S4 and S5 is involved in control of translational fidelity.

In terms of biological role, one of the primary rRNA binding proteins, it binds directly to 16S rRNA where it nucleates assembly of the body of the 30S subunit. With S5 and S12 plays an important role in translational accuracy. The sequence is that of Small ribosomal subunit protein uS4 from Leptospira interrogans serogroup Icterohaemorrhagiae serovar copenhageni (strain Fiocruz L1-130).